The chain runs to 363 residues: Mitogen-activated protein kinase 4 (363 aa).

The 289-residue stretch at 30-318 (YDLVKVVGFG…AKQVMEHPYF (289 aa)) folds into the Protein kinase domain. ATP-binding positions include 36–44 (VGFGACGTV) and Lys59. The active-site Proton acceptor is the Asp156. 2 positions are modified to phosphoserine: Ser186 and Ser187. Thr190 bears the Phosphothreonine; by MKK5 mark. Residues 190–192 (TQY) carry the TQY motif. The residue at position 192 (Tyr192) is a Phosphotyrosine; by MKK5.

This sequence belongs to the protein kinase superfamily. CMGC Ser/Thr protein kinase family. MAP kinase subfamily. It depends on Mg(2+) as a cofactor. Post-translationally, dually phosphorylated on Thr-190 and Tyr-192, which activates the enzyme.

It catalyses the reaction L-seryl-[protein] + ATP = O-phospho-L-seryl-[protein] + ADP + H(+). The enzyme catalyses L-threonyl-[protein] + ATP = O-phospho-L-threonyl-[protein] + ADP + H(+). Functionally, essential for the two main proliferating life stages, the promastigotes and amastigotes, of the parasite. The protein is Mitogen-activated protein kinase 4 of Leishmania mexicana.